The primary structure comprises 317 residues: Ret finger protein-like 1 (317 aa).

The RING-type zinc-finger motif lies at 40–82; sequence CPVCSDYLEKPMSLECGCAVCFKCINSLQKEPHGEDLLCCCCS. The 195-residue stretch at 107 to 301 folds into the B30.2/SPRY domain; it reads EPKLKKILQM…DKSVLSICPV (195 aa).

In terms of processing, phosphorylated by PKC and CDK1. The antiproliferative effect seems to be positively regulated by PKC phosphorylation and negatively by CDK1 phosphorylation. As to expression, seems to be expressed in prostate and less abundantly in adult brain, fetal liver, and fetal kidney.

It is found in the cytoplasm. The protein localises to the nucleus. Negatively regulates the G2-M phase transition, possibly by promoting cyclin B1/CCNB1 and CDK1 proteasomal degradation and thereby preventing their accumulation during interphase. This chain is Ret finger protein-like 1 (RFPL1), found in Homo sapiens (Human).